A 175-amino-acid polypeptide reads, in one-letter code: DPY30 domain-containing protein 1 (175 aa).

The span at 94–112 (QQKEKQKSEDFETGQEKSF) shows a compositional bias: basic and acidic residues. 2 disordered regions span residues 94 to 134 (QQKE…QAEE) and 152 to 175 (APNLSRVEELDEPMLSDNGVSAPP).

Belongs to the dpy-30 family. As to quaternary structure, component of the axonemal radial spoke complex 1 (RS1), at least composed of spoke head proteins RSPH1, RSPH3, RSPH9 and the cilia-specific component RSPH4A or sperm-specific component RSPH6A, spoke stalk proteins RSPH14, DNAJB13, DYDC1, ROPN1L and NME5, and the anchor protein IQUB. Interacts with SH3GL3.

The protein localises to the cytoplasm. The protein resides in the cytoskeleton. It localises to the flagellum axoneme. Its function is as follows. Functions as part of axonemal radial spoke complexes that play an important part in the motility of sperm and cilia. Plays a crucial role during acrosome biogenesis. The chain is DPY30 domain-containing protein 1 (Dydc1) from Mus musculus (Mouse).